A 61-amino-acid chain; its full sequence is uncharacterized protein (61 aa).

The disordered stretch occupies residues 1 to 40 (MRRGGEPQCDGREFRIASSPAREREDDNETAPPQTSAAQE). The segment covering 9 to 25 (CDGREFRIASSPARERE) has biased composition (basic and acidic residues).

This is an uncharacterized protein from Caenorhabditis elegans.